Consider the following 362-residue polypeptide: GDSL esterase/lipase At5g45670 (362 aa).

Positions 1 to 23 (MARMSLMIMMIMVAVTMINIAKS) are cleaved as a signal peptide. Ser36 (nucleophile) is an active-site residue. Active-site residues include Asp326 and His329.

Belongs to the 'GDSL' lipolytic enzyme family.

It localises to the secreted. This Arabidopsis thaliana (Mouse-ear cress) protein is GDSL esterase/lipase At5g45670.